A 52-amino-acid polypeptide reads, in one-letter code: Venom peptide 4b (52 aa).

The signal sequence occupies residues 1 to 23; that stretch reads MRSAILLVIVAIVAILGFLGVNA. AXPX repeat units follow at residues 23–26, 31–34, and 39–42; these read AEPL, AEPN, and AAPL. A propeptide spanning residues 24-41 is cleaved from the precursor; it reads EPLPSPLAEPNPHAKAAP. Residues 30–52 are disordered; sequence LAEPNPHAKAAPLSPAAMASLAG. The span at 37 to 52 shows a compositional bias: low complexity; that stretch reads AKAAPLSPAAMASLAG. At alanine 51 the chain carries Alanine amide.

Expressed by the venom gland.

It is found in the secreted. This Eumenes pomiformis (Potter wasp) protein is Venom peptide 4b.